A 640-amino-acid polypeptide reads, in one-letter code: Chaperone protein DnaK (640 aa).

Thr-198 is subject to Phosphothreonine; by autocatalysis. Residues 600–640 are disordered; the sequence is KTQGAGAEGSEQPHGEQEAGGAAKGETVVDADFEEVKDDKK. Acidic residues predominate over residues 628–640; it reads VDADFEEVKDDKK.

The protein belongs to the heat shock protein 70 family.

In terms of biological role, acts as a chaperone. This is Chaperone protein DnaK from Geobacter sp. (strain M21).